We begin with the raw amino-acid sequence, 521 residues long: MHHPRARYPPGYTSGGGGGGGGGGGGGRGNGGGGFGGGGGGGGGNHGYYGRGPQPQPQQQHYHHQAQQLHQHQQQQQHAQRNSSSQQQQWLRRDQATAAAASGEVAARTAAQLEAVDSSSEDWKAQLNLPAPDTRYRTEDVTATKGNEFEDYFLKRELLMGIYEKGFERPSPIQEESIPIALTGSDILARAKNGTGKTAAFCIPALEKIDPEKNAIQVVILVPTRELALQTSQVCKELGKYLNIQVMVSTGGTSLKDDIMRLYQPVHLLVGTPGRILDLTRKGICVLKDCSMLVMDEADKLLAPEFQPSIEQLIHFLPANRQLLMFSATFPVTVKDFKEKYLPRPYVINLMDELTLKGITQYYAFVEERQKVHCLNTLFSKLQINQSIIFCNSVNRVELLAKKITELGYSCFYIHAKMLQDHRNRVFHDFRNGACRNLVCTDLFTRGIDIQAVNVVINFDFPKTSETYLHRVGRSGRFGHLGLAVNLITYEDRFNLYRIEQELGTEIKTIPPQIDLAVYCQ.

Residues 1 to 97 form a disordered region; that stretch reads MHHPRARYPP…QQWLRRDQAT (97 aa). Residues 13–50 show a composition bias toward gly residues; sequence TSGGGGGGGGGGGGGRGNGGGGFGGGGGGGGGNHGYYG. The segment covering 51–89 has biased composition (low complexity); the sequence is RGPQPQPQQQHYHHQAQQLHQHQQQQQHAQRNSSSQQQQ. The Q motif motif lies at 147–175; it reads NEFEDYFLKRELLMGIYEKGFERPSPIQE. The Helicase ATP-binding domain maps to 178–348; it reads IPIALTGSDI…EKYLPRPYVI (171 aa). 191-198 is a binding site for ATP; that stretch reads AKNGTGKT. A DEAD box motif is present at residues 296 to 299; it reads DEAD. The Helicase C-terminal domain occupies 358–518; the sequence is GITQYYAFVE…TIPPQIDLAV (161 aa).

This sequence belongs to the DEAD box helicase family. DDX6/DHH1 subfamily.

It localises to the cytoplasm. Its subcellular location is the P-body. It catalyses the reaction ATP + H2O = ADP + phosphate + H(+). Its function is as follows. ATP-dependent RNA helicase involved in mRNA turnover, and more specifically in mRNA decapping. This is DEAD-box ATP-dependent RNA helicase 12 from Oryza sativa subsp. japonica (Rice).